The following is a 313-amino-acid chain: Guanine nucleotide-binding protein-like 3-like protein (313 aa).

The span at 1-14 (MGIKKKRQSKRLTT) shows a compositional bias: basic residues. The disordered stretch occupies residues 1 to 41 (MGIKKKRQSKRLTTRKREGMLKRARANERKKRRMDRKMQAK). A compositionally biased stretch (basic and acidic residues) spans 15–27 (RKREGMLKRARAN). GTP contacts are provided by residues 95–98 (SKSD), 178–185 (GNPGSGKN), and 212–215 (TLSS).

The protein belongs to the MMR1/HSR1 GTP-binding protein family.

It is found in the nucleus. The protein resides in the nucleolus. Functionally, required for normal processing of ribosomal pre-rRNA. Required for cell proliferation. Binds GTP. This is Guanine nucleotide-binding protein-like 3-like protein from Encephalitozoon cuniculi (strain GB-M1) (Microsporidian parasite).